The chain runs to 79 residues: Acyl carrier protein (79 aa).

The Carrier domain occupies 2-77 (SDIAERVKKI…DAVKFLEKNS (76 aa)). Residue Ser37 is modified to O-(pantetheine 4'-phosphoryl)serine.

Belongs to the acyl carrier protein (ACP) family. Post-translationally, 4'-phosphopantetheine is transferred from CoA to a specific serine of apo-ACP by AcpS. This modification is essential for activity because fatty acids are bound in thioester linkage to the sulfhydryl of the prosthetic group.

The protein localises to the cytoplasm. Its pathway is lipid metabolism; fatty acid biosynthesis. Its function is as follows. Carrier of the growing fatty acid chain in fatty acid biosynthesis. In Methylobacterium radiotolerans (strain ATCC 27329 / DSM 1819 / JCM 2831 / NBRC 15690 / NCIMB 10815 / 0-1), this protein is Acyl carrier protein.